The primary structure comprises 502 residues: Maturase K (502 aa).

It belongs to the intron maturase 2 family. MatK subfamily.

Its subcellular location is the plastid. The protein resides in the chloroplast. Usually encoded in the trnK tRNA gene intron. Probably assists in splicing its own and other chloroplast group II introns. In Arabis blepharophylla (Coast rock-cress), this protein is Maturase K.